Reading from the N-terminus, the 628-residue chain is tRNA uridine 5-carboxymethylaminomethyl modification enzyme MnmG (628 aa).

Residue 13 to 18 coordinates FAD; it reads GAGHAG. NAD(+) is bound at residue 273–287; it reads GPRYCPSIEDKIVRF.

Belongs to the MnmG family. In terms of assembly, homodimer. Heterotetramer of two MnmE and two MnmG subunits. FAD is required as a cofactor.

It localises to the cytoplasm. NAD-binding protein involved in the addition of a carboxymethylaminomethyl (cmnm) group at the wobble position (U34) of certain tRNAs, forming tRNA-cmnm(5)s(2)U34. This chain is tRNA uridine 5-carboxymethylaminomethyl modification enzyme MnmG, found in Buchnera aphidicola subsp. Acyrthosiphon pisum (strain 5A).